We begin with the raw amino-acid sequence, 219 residues long: Large ribosomal subunit protein uL3 (219 aa).

Disordered stretches follow at residues 62-81 (DSRS…KKAG) and 136-156 (QARG…SVGM).

Belongs to the universal ribosomal protein uL3 family. Part of the 50S ribosomal subunit. Forms a cluster with proteins L14 and L19.

In terms of biological role, one of the primary rRNA binding proteins, it binds directly near the 3'-end of the 23S rRNA, where it nucleates assembly of the 50S subunit. The sequence is that of Large ribosomal subunit protein uL3 from Staphylococcus saprophyticus subsp. saprophyticus (strain ATCC 15305 / DSM 20229 / NCIMB 8711 / NCTC 7292 / S-41).